The primary structure comprises 413 residues: Eukaryotic initiation factor 4A-8 (413 aa).

The short motif at 40-68 (DSFDAMGLQENLLRGIYAYGFEKPSAIQQ) is the Q motif element. One can recognise a Helicase ATP-binding domain in the interval 71–241 (IVPFCKGLDV…RKFMNKPVRI (171 aa)). 84 to 91 (AQSGTGKT) contacts ATP. A DEAD box motif is present at residues 189–192 (DEAD). Positions 252–413 (GIKQFYVNVD…ELPSNVADLL (162 aa)) constitute a Helicase C-terminal domain.

This sequence belongs to the DEAD box helicase family. eIF4A subfamily. EIF4F is a multi-subunit complex, the composition of which varies with external and internal environmental conditions. It is composed of at least EIF4A, EIF4E and EIF4G. In terms of tissue distribution, pollen specific.

It catalyses the reaction ATP + H2O = ADP + phosphate + H(+). Its function is as follows. ATP-dependent RNA helicase which is a subunit of the eIF4F complex involved in cap recognition and is required for mRNA binding to ribosome. In the current model of translation initiation, eIF4A unwinds RNA secondary structures in the 5'-UTR of mRNAs which is necessary to allow efficient binding of the small ribosomal subunit, and subsequent scanning for the initiator codon. In Nicotiana tabacum (Common tobacco), this protein is Eukaryotic initiation factor 4A-8.